A 26-amino-acid chain; its full sequence is ATP synthase subunit gamma, mitochondrial (26 aa).

This sequence belongs to the ATPase gamma chain family. As to quaternary structure, F-type ATPases have 2 components, CF(1) - the catalytic core - and CF(0) - the membrane proton channel. CF(1) has five subunits: alpha(3), beta(3), gamma(1), delta(1), epsilon(1). CF(0) has three main subunits: a, b and c.

It is found in the mitochondrion. The protein localises to the mitochondrion inner membrane. Functionally, mitochondrial membrane ATP synthase (F(1)F(0) ATP synthase or Complex V) produces ATP from ADP in the presence of a proton gradient across the membrane which is generated by electron transport complexes of the respiratory chain. F-type ATPases consist of two structural domains, F(1) - containing the extramembraneous catalytic core, and F(0) - containing the membrane proton channel, linked together by a central stalk and a peripheral stalk. During catalysis, ATP synthesis in the catalytic domain of F(1) is coupled via a rotary mechanism of the central stalk subunits to proton translocation. Part of the complex F(1) domain and the central stalk which is part of the complex rotary element. The gamma subunit protrudes into the catalytic domain formed of alpha(3)beta(3). Rotation of the central stalk against the surrounding alpha(3)beta(3) subunits leads to hydrolysis of ATP in three separate catalytic sites on the beta subunits. The chain is ATP synthase subunit gamma, mitochondrial (ATPC) from Spinacia oleracea (Spinach).